Reading from the N-terminus, the 876-residue chain is GRB2-associated and regulator of MAPK protein (876 aa).

The interval 9–318 is CABIT; it reads KDVKWSSASF…NLIKGEVWQD (310 aa). Residue Y451 is modified to Phosphotyrosine. 2 disordered regions span residues 460-569 and 708-741; these read SVKR…TLSY and DRML…LSEP. Residues 461–471 show a composition bias toward polar residues; that stretch reads VKRSGQPLTRS. Residues 532–549 show a composition bias toward pro residues; sequence PPVPPRSSKPSSPTPSVP. Positions 556–569 are enriched in polar residues; the sequence is VRQQTRSPSPTLSY. Residues 811–876 form the SAM domain; that stretch reads LSVEEVSKSL…QFINGWRPKM (66 aa).

The protein belongs to the GAREM family.

Adapter protein that may provide a link between cell surface epidermal growth factor receptor and the MAPK/ERK signaling pathway. May promote cell proliferation. This Xenopus laevis (African clawed frog) protein is GRB2-associated and regulator of MAPK protein (garem1).